The following is a 728-amino-acid chain: 1,4-alpha-glucan branching enzyme GlgB (728 aa).

Asp-405 acts as the Nucleophile in catalysis. Catalysis depends on Glu-458, which acts as the Proton donor.

It belongs to the glycosyl hydrolase 13 family. GlgB subfamily. Monomer.

The catalysed reaction is Transfers a segment of a (1-&gt;4)-alpha-D-glucan chain to a primary hydroxy group in a similar glucan chain.. The protein operates within glycan biosynthesis; glycogen biosynthesis. In terms of biological role, catalyzes the formation of the alpha-1,6-glucosidic linkages in glycogen by scission of a 1,4-alpha-linked oligosaccharide from growing alpha-1,4-glucan chains and the subsequent attachment of the oligosaccharide to the alpha-1,6 position. This chain is 1,4-alpha-glucan branching enzyme GlgB, found in Shigella boydii serotype 4 (strain Sb227).